Consider the following 101-residue polypeptide: Apolipoprotein C-II (101 aa).

The signal sequence occupies residues 1-17; that stretch reads MGTRFLLALCLVLLVLG. Residues 66 to 74 are lipid binding; the sequence is AVDEKLRDL. Positions 78–101 are lipoprotein lipase cofactor; sequence STAAMSTYTGIFTDQVLSVLKGEE.

The protein belongs to the apolipoprotein C2 family. Proapolipoprotein C-II is synthesized as a sialic acid containing glycoprotein which is subsequently desialylated prior to its proteolytic processing. Post-translationally, proapolipoprotein C-II, the major form found in plasma undergoes proteolytic cleavage of its N-terminal hexapeptide to generate apolipoprotein C-II, which occurs as the minor form in plasma.

It localises to the secreted. Its function is as follows. Component of chylomicrons, very low-density lipoproteins (VLDL), low-density lipoproteins (LDL), and high-density lipoproteins (HDL) in plasma. Plays an important role in lipoprotein metabolism as an activator of lipoprotein lipase. Both proapolipoprotein C-II and apolipoprotein C-II can activate lipoprotein lipase. This chain is Apolipoprotein C-II (APOC2), found in Chlorocebus sabaeus (Green monkey).